The chain runs to 189 residues: Phosphoheptose isomerase (189 aa).

Residues 34-189 (LVEAFRKGNK…CDLVEKALFA (156 aa)) form the SIS domain. A substrate-binding site is contributed by 49–51 (NGG). Zn(2+) is bound by residues H58 and E62. Residues E62, 91–92 (ND), 117–119 (STS), S122, and Q169 each bind substrate. Zn(2+) is bound by residues Q169 and H177.

This sequence belongs to the SIS family. GmhA subfamily. As to quaternary structure, homotetramer. The cofactor is Zn(2+).

It is found in the cytoplasm. The catalysed reaction is 2 D-sedoheptulose 7-phosphate = D-glycero-alpha-D-manno-heptose 7-phosphate + D-glycero-beta-D-manno-heptose 7-phosphate. It participates in carbohydrate biosynthesis; D-glycero-D-manno-heptose 7-phosphate biosynthesis; D-glycero-alpha-D-manno-heptose 7-phosphate and D-glycero-beta-D-manno-heptose 7-phosphate from sedoheptulose 7-phosphate: step 1/1. Its function is as follows. Catalyzes the isomerization of sedoheptulose 7-phosphate in D-glycero-D-manno-heptose 7-phosphate. This chain is Phosphoheptose isomerase, found in Pelobacter propionicus (strain DSM 2379 / NBRC 103807 / OttBd1).